Consider the following 465-residue polypeptide: Auxin transporter-like protein 3 (465 aa).

At 1–52 (MTSEKVETVVAGNYLEMEREEEGSKSTTGKLSKFFWHGGSVYDAWFSCASNQ) the chain is on the cytoplasmic side. The helical transmembrane segment at 53–70 (VAQVLLTLPYSFSQLGML) threads the bilayer. Residues 71–72 (SG) are Extracellular-facing. A helical transmembrane segment spans residues 73–93 (ILFQIFYGLMGSWTAYIISVL). The Cytoplasmic portion of the chain corresponds to 94-129 (YVEYRTRKEREKVDFRNHVIQWFEVLDGLLGKHWRN). Residues 130–150 (LGLFFNCTFLLFGSVIQLIAC) traverse the membrane as a helical segment. Over 151–165 (ASNIYYINDHLDKRT) the chain is Extracellular. Residues 166–186 (WTYIFGACCATTVFIPSFHNY) traverse the membrane as a helical segment. The Cytoplasmic segment spans residues 187-189 (RIW). Residues 190-210 (SFLGLVMTTYTAWYMTIASIL) traverse the membrane as a helical segment. Residues 211-225 (HGQAEDVKHSGPTKL) are Extracellular-facing. The helical transmembrane segment at 226-246 (VLYFTGATNILYTFGGHAVTV) threads the bilayer. Residues 247-259 (EIMHAMWKPQKFK) are Cytoplasmic-facing. The chain crosses the membrane as a helical span at residues 260 to 280 (MIYLIATLYVMTLTLPSAAAV). At 281–307 (YWAFGDNLLTHSNALSLLPRTGFRDTA) the chain is on the extracellular side. A helical transmembrane segment spans residues 308 to 328 (VILMLIHQFITFGFACTPLYF). Topologically, residues 329-349 (VWEKFLGVHETKSLLKRALVR) are cytoplasmic. The chain crosses the membrane as a helical span at residues 350-370 (LPVVIPIWFLAIIFPFFGPIN). Over 371–374 (STVG) the chain is Extracellular. Residues 375–395 (SLLVSFTVYIIPALAHMVTFA) form a helical membrane-spanning segment. Over 396-421 (SAPARENAVERPPSFLGGWVGLYSVN) the chain is Cytoplasmic. Residues 422–442 (VFVAVWVLVVGFGLGGWASML) traverse the membrane as a helical segment. The Extracellular portion of the chain corresponds to 443-465 (NFVHQIKTFGLFAKCFQCPPHKA).

It belongs to the amino acid/polyamine transporter 2 family. Amino acid/auxin permease (AAAP) (TC 2.A.18.1) subfamily. In terms of tissue distribution, shoots and roots of nodulating plants. Low levels in roots, nodules, stems, petioles, leaves, shoot apices and flowers.

The protein localises to the cell membrane. In terms of biological role, carrier protein involved in proton-driven auxin influx. Mediates the formation of auxin gradient from developing leaves (site of auxin biosynthesis) to tips by contributing to the loading of auxin in vascular tissues and facilitating acropetal (base to tip) auxin transport within inner tissues of the root apex, and basipetal (tip to base) auxin transport within outer tissues of the root apex. May be involved in lateral roots and nodules formation. The sequence is that of Auxin transporter-like protein 3 (LAX3) from Medicago truncatula (Barrel medic).